The primary structure comprises 279 residues: Probable ribosomal RNA small subunit methyltransferase A (279 aa).

S-adenosyl-L-methionine-binding residues include asparagine 23, leucine 25, glycine 50, glutamate 71, aspartate 95, and asparagine 110.

It belongs to the class I-like SAM-binding methyltransferase superfamily. rRNA adenine N(6)-methyltransferase family. RsmA subfamily.

The protein localises to the cytoplasm. Its function is as follows. Specifically dimethylates two adjacent adenosines in the loop of a conserved hairpin near the 3'-end of 16S rRNA in the 30S particle. May play a critical role in biogenesis of 30S subunits. The protein is Probable ribosomal RNA small subunit methyltransferase A of Thermococcus kodakarensis (strain ATCC BAA-918 / JCM 12380 / KOD1) (Pyrococcus kodakaraensis (strain KOD1)).